We begin with the raw amino-acid sequence, 240 residues long: tRNA (guanine-N(1)-)-methyltransferase (240 aa).

Residues G110 and 129–134 contribute to the S-adenosyl-L-methionine site; that span reads LGDFVL.

It belongs to the RNA methyltransferase TrmD family. As to quaternary structure, homodimer.

Its subcellular location is the cytoplasm. The enzyme catalyses guanosine(37) in tRNA + S-adenosyl-L-methionine = N(1)-methylguanosine(37) in tRNA + S-adenosyl-L-homocysteine + H(+). In terms of biological role, specifically methylates guanosine-37 in various tRNAs. This chain is tRNA (guanine-N(1)-)-methyltransferase, found in Clostridium botulinum (strain 657 / Type Ba4).